A 103-amino-acid polypeptide reads, in one-letter code: Cell division protein FtsB (103 aa).

The Cytoplasmic portion of the chain corresponds to 1 to 3; sequence MGK. Residues 4–21 form a helical membrane-spanning segment; that stretch reads LTLLLLAILVWLQYSLWF. Residues 22 to 103 are Periplasmic-facing; it reads GKNGIHDYSR…RAQTAGQNNR (82 aa). Positions 31 to 71 form a coiled coil; it reads RVNDDVAAQQATNAKLKARNDQLFAEIDDLNGGQEALEERA.

This sequence belongs to the FtsB family. As to quaternary structure, part of a complex composed of FtsB, FtsL and FtsQ.

The protein resides in the cell inner membrane. Functionally, essential cell division protein. May link together the upstream cell division proteins, which are predominantly cytoplasmic, with the downstream cell division proteins, which are predominantly periplasmic. The polypeptide is Cell division protein FtsB (Escherichia fergusonii (strain ATCC 35469 / DSM 13698 / CCUG 18766 / IAM 14443 / JCM 21226 / LMG 7866 / NBRC 102419 / NCTC 12128 / CDC 0568-73)).